The sequence spans 109 residues: Resistin (109 aa).

Residues 1 to 18 (MKALSFLFIPVLGLLVCG) form the signal peptide. Cystine bridges form between Cys51-Cys104, Cys63-Cys103, Cys72-Cys89, Cys74-Cys91, and Cys78-Cys93.

It belongs to the resistin/FIZZ family. In terms of assembly, homodimer; disulfide-linked.

Its subcellular location is the secreted. Hormone that seems to suppress insulin ability to stimulate glucose uptake into adipose cells. Potentially links obesity to diabetes. This chain is Resistin (RETN), found in Bos taurus (Bovine).